A 261-amino-acid polypeptide reads, in one-letter code: Mite allergen Der p 3 (261 aa).

The N-terminal stretch at M1–A18 is a signal peptide. Residues N19 to T29 constitute a propeptide that is removed on maturation. Positions I30–S260 constitute a Peptidase S1 domain. Cysteines 54 and 70 form a disulfide. Catalysis depends on charge relay system residues H69 and D114. 2 cysteine pairs are disulfide-bonded: C181-C198 and C210-C236. S214 functions as the Charge relay system in the catalytic mechanism.

It belongs to the peptidase S1 family.

The protein localises to the secreted. This Dermatophagoides pteronyssinus (European house dust mite) protein is Mite allergen Der p 3 (DERP3).